Consider the following 147-residue polypeptide: Ponticulin-like protein C1 (147 aa).

A signal peptide spans 1–20; that stretch reads MKFTKSLLLLIVAVFASSNA. A lipid anchor (GPI-like-anchor amidated asparagine) is attached at N118. An N-linked (GlcNAc...) asparagine glycan is attached at N118. The propeptide at 119–147 is removed in mature form; sequence SSESDSSDSTRIGASFALAASVLLSMLAI.

It belongs to the ponticulin family. In terms of processing, the GPI-like-anchor contains a phosphoceramide group, rather than a phosphatidyl group.

The protein localises to the cell membrane. The chain is Ponticulin-like protein C1 (ponC1) from Dictyostelium discoideum (Social amoeba).